The sequence spans 242 residues: Phosphoribosylaminoimidazole-succinocarboxamide synthase (242 aa).

The protein belongs to the SAICAR synthetase family.

It catalyses the reaction 5-amino-1-(5-phospho-D-ribosyl)imidazole-4-carboxylate + L-aspartate + ATP = (2S)-2-[5-amino-1-(5-phospho-beta-D-ribosyl)imidazole-4-carboxamido]succinate + ADP + phosphate + 2 H(+). It functions in the pathway purine metabolism; IMP biosynthesis via de novo pathway; 5-amino-1-(5-phospho-D-ribosyl)imidazole-4-carboxamide from 5-amino-1-(5-phospho-D-ribosyl)imidazole-4-carboxylate: step 1/2. In Prochlorococcus marinus (strain MIT 9303), this protein is Phosphoribosylaminoimidazole-succinocarboxamide synthase.